We begin with the raw amino-acid sequence, 139 residues long: Gas vesicle protein A (139 aa).

The tract at residues 113 to 139 is disordered; sequence EKLGDMLTSDEPEPRKATRVRSRRADR. Over residues 129 to 139 the composition is skewed to basic residues; that stretch reads ATRVRSRRADR.

The protein belongs to the gas vesicle GvpA family. As to quaternary structure, the gas vesicle shell is 2 nm thick and consists of a single layer of this protein. It forms helical ribs nearly perpendicular to the long axis of the vesicle.

It localises to the gas vesicle shell. In terms of biological role, gas vesicles are hollow, gas filled proteinaceous nanostructures found in some microorganisms. During planktonic growth they allow positioning of the organism at a favorable depth for light or nutrient acquisition. GvpA forms the protein shell. This Mycobacterium sp. (strain JLS) protein is Gas vesicle protein A.